The following is a 170-amino-acid chain: Non-specific lipid transfer protein GPI-anchored 5 (170 aa).

The N-terminal stretch at 1–24 is a signal peptide; that stretch reads MKMEMGLVFLTVFMAVMSSTMVSA. Intrachain disulfides connect cysteine 28-cysteine 69, cysteine 38-cysteine 53, cysteine 54-cysteine 95, and cysteine 67-cysteine 105. 4 N-linked (GlcNAc...) asparagine glycosylation sites follow: asparagine 45, asparagine 84, asparagine 124, and asparagine 130. The disordered stretch occupies residues 105-148; that stretch reads CNTGGGGGGSTSDSPAESPNSSGPGNGSKTVPVGEGDGPPSSDG. Serine 146 is lipidated: GPI-anchor amidated serine. Residues 147 to 170 constitute a propeptide, removed in mature form; it reads DGSSIKFSFPLIAFFSAVSYMAIF.

Belongs to the plant LTP family. Expressed in seedlings, preferentially in the endodermis of hypocotyls and roots, as well as in anthers, sepals and flower tori.

The protein resides in the cell membrane. Lipid transfer protein involved in seed and ovule maturation and development, probably by regulating the fatty acids homeostasis during suberin and sporopollenin biosynthesis or deposition. Contributes to pre-invasive defense against some non-host powdery mildew pathogens by preventing the penetration of the epidermal cell wall by the fungal agents (e.g. Blumeria graminis f. sp. hordei (Bgh)). The protein is Non-specific lipid transfer protein GPI-anchored 5 of Arabidopsis thaliana (Mouse-ear cress).